The primary structure comprises 221 residues: ATP phosphoribosyltransferase (221 aa).

It belongs to the ATP phosphoribosyltransferase family. Short subfamily. Heteromultimer composed of HisG and HisZ subunits.

It localises to the cytoplasm. It catalyses the reaction 1-(5-phospho-beta-D-ribosyl)-ATP + diphosphate = 5-phospho-alpha-D-ribose 1-diphosphate + ATP. The protein operates within amino-acid biosynthesis; L-histidine biosynthesis; L-histidine from 5-phospho-alpha-D-ribose 1-diphosphate: step 1/9. Its function is as follows. Catalyzes the condensation of ATP and 5-phosphoribose 1-diphosphate to form N'-(5'-phosphoribosyl)-ATP (PR-ATP). Has a crucial role in the pathway because the rate of histidine biosynthesis seems to be controlled primarily by regulation of HisG enzymatic activity. The chain is ATP phosphoribosyltransferase from Anaeromyxobacter dehalogenans (strain 2CP-1 / ATCC BAA-258).